Consider the following 138-residue polypeptide: Large ribosomal subunit protein uL16 (138 aa).

Residues 1–16 (MLIPRKVAHRKQHHPG) are compositionally biased toward basic residues. The segment at 1–24 (MLIPRKVAHRKQHHPGRTGAAKGG) is disordered.

This sequence belongs to the universal ribosomal protein uL16 family. In terms of assembly, part of the 50S ribosomal subunit.

In terms of biological role, binds 23S rRNA and is also seen to make contacts with the A and possibly P site tRNAs. The polypeptide is Large ribosomal subunit protein uL16 (Frankia alni (strain DSM 45986 / CECT 9034 / ACN14a)).